The sequence spans 780 residues: Pendrin (780 aa).

Topologically, residues 1–87 are cytoplasmic; it reads MAAPGGRSEP…YRVKEWLLSD (87 aa). A helical membrane pass occupies residues 88–108; it reads VISGVSTGLVATLQGMAYALL. Alanine 109 is a topological domain (extracellular). The chain crosses the membrane as a helical span at residues 110–130; the sequence is AVPVGYGLYSAFFPILTYFIF. The Cytoplasmic portion of the chain corresponds to 131–135; that stretch reads GTSRH. Residues 136–156 traverse the membrane as a helical segment; that stretch reads ISVGPFPVVSLMVGSVVLSMA. The Extracellular portion of the chain corresponds to 157-191; that stretch reads PDEHFLVSSSNGTVLNTTMIDTAARDTARVLIASA. The chain crosses the membrane as a helical span at residues 192-212; that stretch reads LTLLVGIIQLIFGGLQIGFIV. At 213 to 218 the chain is on the cytoplasmic side; that stretch reads RYLADP. The chain crosses the membrane as a helical span at residues 219–239; sequence LVGGFTTAAAFQVLVSQLKIV. Over 240–263 the chain is Extracellular; the sequence is LNVSTKNYNGVLSIIYTLVEIFQN. Residues 264–284 form a helical membrane-spanning segment; that stretch reads IGDTNLADFTAGLLTIVVCMA. Over 285-295 the chain is Cytoplasmic; the sequence is VKELNDRFRHK. Residues 296 to 316 traverse the membrane as a helical segment; that stretch reads IPVPIPIEVIVTIIATAISYG. At 317–344 the chain is on the extracellular side; sequence ANLEKNYNAGIVKSIPRGFLPPELPPVS. A helical membrane pass occupies residues 345–365; that stretch reads LFSEMLAASFSIAVVAYAIAV. Residues 366–384 are Cytoplasmic-facing; that stretch reads SVGKVYATKYDYTIDGNQE. The helical transmembrane segment at 385–405 threads the bilayer; sequence FIAFGISNIFSGFFSCFVATT. Residues 406–421 lie on the Extracellular side of the membrane; the sequence is ALSRTAVQESTGGKTQ. A helical membrane pass occupies residues 422-442; sequence VAGIISAAIVMIAILALGKLL. Topologically, residues 443–448 are cytoplasmic; the sequence is EPLQKS. The chain crosses the membrane as a helical span at residues 449–469; the sequence is VLAAVVIANLKGMFMQLCDIP. Residues 470–486 are Extracellular-facing; that stretch reads RLWRQNKIDAVIWVFTC. A helical transmembrane segment spans residues 487-507; the sequence is IVSIILGLDLGLLAGLIFGLL. Residues 508–780 lie on the Cytoplasmic side of the membrane; it reads TVVLRVQFPS…QDEAMRTLAS (273 aa). An STAS domain is found at 535-729; sequence NYKNIEEPQG…LTVHDAILYL (195 aa).

It belongs to the SLC26A/SulP transporter (TC 2.A.53) family. In terms of assembly, interacts with IQGAP1; this interaction enhances the chloride-bicarbonate exchange activity of SLC26A4. As to expression, highly expressed in the kidney (at protein level). High expression in adult thyroid, lower expression in adult and fetal kidney and fetal brain. Not expressed in other tissues.

It localises to the cell membrane. The protein resides in the apical cell membrane. The catalysed reaction is chloride(in) = chloride(out). It carries out the reaction iodide(out) = iodide(in). It catalyses the reaction hydrogencarbonate(in) + chloride(out) = hydrogencarbonate(out) + chloride(in). The enzyme catalyses iodide(in) + hydrogencarbonate(out) = iodide(out) + hydrogencarbonate(in). The catalysed reaction is iodide(in) + chloride(out) = iodide(out) + chloride(in). It carries out the reaction formate(in) + chloride(out) = formate(out) + chloride(in). Functionally, sodium-independent transporter of chloride and iodide. Mediates electroneutral chloride-bicarbonate, chloride-iodide and chloride-formate exchange with 1:1 stoichiometry. Mediates electroneutral iodide-bicarbonate exchange. This is Pendrin (SLC26A4) from Homo sapiens (Human).